Reading from the N-terminus, the 900-residue chain is Alanine--tRNA ligase (900 aa).

Zn(2+) contacts are provided by His604, His608, Cys708, and His712.

This sequence belongs to the class-II aminoacyl-tRNA synthetase family. The cofactor is Zn(2+).

Its subcellular location is the cytoplasm. The catalysed reaction is tRNA(Ala) + L-alanine + ATP = L-alanyl-tRNA(Ala) + AMP + diphosphate. Functionally, catalyzes the attachment of alanine to tRNA(Ala) in a two-step reaction: alanine is first activated by ATP to form Ala-AMP and then transferred to the acceptor end of tRNA(Ala). Also edits incorrectly charged Ser-tRNA(Ala) and Gly-tRNA(Ala) via its editing domain. The polypeptide is Alanine--tRNA ligase (Saccharolobus islandicus (strain M.16.27) (Sulfolobus islandicus)).